Reading from the N-terminus, the 194-residue chain is Holliday junction branch migration complex subunit RuvA (194 aa).

Residues 1 to 62 (MIGYLKGNVI…EDSLDLYGFK (62 aa)) form a domain I region. The domain II stretch occupies residues 63–136 (TMEERELFET…KGKLKDMSGD (74 aa)). Residues 136–140 (DFEEP) form a flexible linker region. The segment at 141–194 (LPDNRNTELSDALASLGYSELEIEEALSNADIKNNGSLEENIKKALGYLGSKGS) is domain III.

Belongs to the RuvA family. In terms of assembly, homotetramer. Forms an RuvA(8)-RuvB(12)-Holliday junction (HJ) complex. HJ DNA is sandwiched between 2 RuvA tetramers; dsDNA enters through RuvA and exits via RuvB. An RuvB hexamer assembles on each DNA strand where it exits the tetramer. Each RuvB hexamer is contacted by two RuvA subunits (via domain III) on 2 adjacent RuvB subunits; this complex drives branch migration. In the full resolvosome a probable DNA-RuvA(4)-RuvB(12)-RuvC(2) complex forms which resolves the HJ.

It localises to the cytoplasm. Functionally, the RuvA-RuvB-RuvC complex processes Holliday junction (HJ) DNA during genetic recombination and DNA repair, while the RuvA-RuvB complex plays an important role in the rescue of blocked DNA replication forks via replication fork reversal (RFR). RuvA specifically binds to HJ cruciform DNA, conferring on it an open structure. The RuvB hexamer acts as an ATP-dependent pump, pulling dsDNA into and through the RuvAB complex. HJ branch migration allows RuvC to scan DNA until it finds its consensus sequence, where it cleaves and resolves the cruciform DNA. The protein is Holliday junction branch migration complex subunit RuvA of Halothermothrix orenii (strain H 168 / OCM 544 / DSM 9562).